Here is a 52-residue protein sequence, read N- to C-terminus: Large ribosomal subunit protein bL33 (52 aa).

This sequence belongs to the bacterial ribosomal protein bL33 family.

This chain is Large ribosomal subunit protein bL33, found in Campylobacter jejuni subsp. jejuni serotype O:6 (strain 81116 / NCTC 11828).